Here is a 327-residue protein sequence, read N- to C-terminus: Lipid phosphate phosphatase 1 (327 aa).

6 consecutive transmembrane segments (helical) span residues 51–71, 93–113, 118–138, 187–207, 217–237, and 244–264; these read WIILVILIAIEIGLNLISPFY, IWSVPVYAVLLPIIVFVCFYL, VYDLHHSILGLLFAVLITGVI, FPSGHTSWSFAGLTFLSLYLS, GHVAKLCLVIFPLLAACLVGI, and WHHWQDVFAGALIGTLVAAFC.

It belongs to the PA-phosphatase related phosphoesterase family. In terms of tissue distribution, strongly expressed in leaves, moderately in roots, weakly in floral hamps and flower buds, and not detected in adult flowers and seedpods.

The protein resides in the membrane. PA phosphatase activity inhibited by N-ethylmaleimide with an IC(50) value of 10 mM. In terms of biological role, plays a general role in cellular responses to stress, may be by attenuating the signal produced by phospholipases. Exhibits both diacylglycerol pyrophosphate (DGPP) phosphatase and phosphatidate (PA) phosphatase activities. Substrate preference is diacylglycerol pyrophosphate &gt; phosphatidate. The polypeptide is Lipid phosphate phosphatase 1 (LPP1) (Arabidopsis thaliana (Mouse-ear cress)).